A 427-amino-acid polypeptide reads, in one-letter code: Anhydro-N-acetylmuramic acid kinase (427 aa).

32 to 39 (GTSLDGMD) is an ATP binding site.

It belongs to the anhydro-N-acetylmuramic acid kinase family.

The enzyme catalyses 1,6-anhydro-N-acetyl-beta-muramate + ATP + H2O = N-acetyl-D-muramate 6-phosphate + ADP + H(+). It participates in amino-sugar metabolism; 1,6-anhydro-N-acetylmuramate degradation. The protein operates within cell wall biogenesis; peptidoglycan recycling. In terms of biological role, catalyzes the specific phosphorylation of 1,6-anhydro-N-acetylmuramic acid (anhMurNAc) with the simultaneous cleavage of the 1,6-anhydro ring, generating MurNAc-6-P. Is required for the utilization of anhMurNAc either imported from the medium or derived from its own cell wall murein, and thus plays a role in cell wall recycling. In Psychrobacter cryohalolentis (strain ATCC BAA-1226 / DSM 17306 / VKM B-2378 / K5), this protein is Anhydro-N-acetylmuramic acid kinase.